The sequence spans 317 residues: Transcriptional regulator LsrR (317 aa).

Positions 33–56 (QSEISDRLGLTRLKVSRLLEKGHQ) form a DNA-binding region, H-T-H motif.

Belongs to the SorC transcriptional regulatory family.

Its subcellular location is the cytoplasm. Inactivated by phosphorylated autoinducer-2 (phospho-AI-2). Phospho-AI-2 acts by binding to LsrR, which is then unable to bind to the promoter regions, allowing the transcription of the target genes. Its function is as follows. Transcriptional regulator that represses the expression of the lsr operon in the absence of the quorum-sensing signaling molecule autoinducer 2 (AI-2). It also represses the expression of the lsrRK operon. Acts by binding directly to the lsrA and lsrR promoter regions. In the presence of phosphorylated autoinducer-2 (phospho-AI-2), LsrR is inactivated, leading to the transcription of the genes. This Escherichia coli O157:H7 protein is Transcriptional regulator LsrR (lsrR).